Reading from the N-terminus, the 325-residue chain is NADH-quinone oxidoreductase subunit H (325 aa).

Transmembrane regions (helical) follow at residues 11-31 (ILLS…CGAF), 50-69 (NRVG…KMFF), 81-101 (VIFT…FAIV), 114-134 (IGIL…LFAG), 154-174 (VSYE…AGSF), 186-206 (LWNV…GVAV), 237-257 (FFVG…TLFF), 265-285 (LPPF…FILI), and 304-324 (VCLP…LWQA).

The protein belongs to the complex I subunit 1 family. In terms of assembly, NDH-1 is composed of 13 different subunits. Subunits NuoA, H, J, K, L, M, N constitute the membrane sector of the complex.

Its subcellular location is the cell inner membrane. It catalyses the reaction a quinone + NADH + 5 H(+)(in) = a quinol + NAD(+) + 4 H(+)(out). Functionally, NDH-1 shuttles electrons from NADH, via FMN and iron-sulfur (Fe-S) centers, to quinones in the respiratory chain. The immediate electron acceptor for the enzyme in this species is believed to be ubiquinone. Couples the redox reaction to proton translocation (for every two electrons transferred, four hydrogen ions are translocated across the cytoplasmic membrane), and thus conserves the redox energy in a proton gradient. This subunit may bind ubiquinone. The protein is NADH-quinone oxidoreductase subunit H of Salmonella agona (strain SL483).